The following is a 356-amino-acid chain: Peptide chain release factor 1 (356 aa).

Gln-233 is subject to N5-methylglutamine.

This sequence belongs to the prokaryotic/mitochondrial release factor family. In terms of processing, methylated by PrmC. Methylation increases the termination efficiency of RF1.

Its subcellular location is the cytoplasm. Its function is as follows. Peptide chain release factor 1 directs the termination of translation in response to the peptide chain termination codons UAG and UAA. This Bacillus subtilis (strain 168) protein is Peptide chain release factor 1 (prfA).